The following is a 1856-amino-acid chain: Protein TANC1 (1856 aa).

Position 1 is an N-acetylmethionine (M1). 5 disordered regions span residues 1 to 45 (MLKA…LSTT), 58 to 130 (SMSL…SCSP), 203 to 222 (KSPCETISSPSSTLESKDSG), 262 to 296 (RADNCSPVAEEETTGSAESVLPKAEPSAGDGPVPY), and 437 to 489 (IASS…RPRE). Over residues 8-21 (KSREGGKGSKKEAG) the composition is skewed to basic and acidic residues. Residues 29 to 45 (PALSSSGDSPVNSLSTT) are compositionally biased toward polar residues. Phosphoserine occurs at positions 60, 63, 64, 204, 267, and 462. The segment covering 60–77 (SLPSSPLLPRQSLLTQSR) has biased composition (low complexity). A compositionally biased stretch (polar residues) spans 203-216 (KSPCETISSPSSTL). Residues 439–475 (SSSPSLSPKSSDPTQDLPGTPLLSPSSSTSALSVTRT) are compositionally biased toward low complexity. ANK repeat units follow at residues 893–925 (EGLSAALASLRNLYTPNVKVSRLLILGGANVNY), 931–960 (NNAPILCVQSHLGHEEVVTLLLEFGACLDG), 964–993 (NGMNALCYAAAAGHMKLVCLLIKKGARVDH), 997–1026 (KGQCALVHSALRGHSDILQYLLNCEWSAGP), 1037–1066 (ALQQALTAAASMGHSSVVQSLLGMAEEHEI), 1075–1104 (WGETALTAAAGRGKVEICELLLERGAAVSR), 1108–1137 (RGVPPLFCAARQGHWQVVRLLLDRGCDVNL), 1141–1170 (QGRTPLMVASCEGHLSTVEFLLSKGAALSS), 1174–1203 (EGLSALSWACLKGHRAVVQYLVEEGAEIDQ), 1207–1236 (NGRTPLDLAAFYGDAETVLYLVEKGAVIEH), and 1240–1269 (SGMRPLDRAIGCRNTAVVVTLLRKGAKLGN). TPR repeat units follow at residues 1286–1319 (LQKLVEEGNVMYKKGKMKEAAQRYQYALRKFPRE), 1333–1366 (VSLYLNLSRCRRKTNDFGLAEEFASKALELKPKS), and 1368–1400 (EAFYARARAKRNSRQFLAALADLQEAVKLCPNN). Low complexity predominate over residues 1417–1426 (LQRNQQQKQQ). Disordered stretches follow at residues 1417 to 1597 (LQRN…FGDR), 1636 to 1720 (DMAP…NTPF), and 1832 to 1856 (HVSTEAHRSHLTSAKPKRSFIESNV). S1436 and S1463 each carry phosphoserine. Acidic residues predominate over residues 1454 to 1463 (EEAEEEDTSS). 2 stretches are compositionally biased toward polar residues: residues 1490-1505 (EGLQSKGRSASPQSRA) and 1524-1556 (PTKQAQIVKTNQHLGSGQSSMRNSSTKIQVSSQ). Low complexity predominate over residues 1656-1686 (SLSSSGSSGSPSSSIKMSSSTSSLTSSSSVS). 3 positions are modified to phosphoserine: S1665, S1673, and S1674.

This sequence belongs to the TANC family. As to quaternary structure, interacts probably directly with DLG1, DLG4, HOMER1. Interacts with DLGAP1, INA, CAMK2A, GRIN2B and GRIA1. Interacts with TNIK and MINK1. In terms of processing, phosphorylated; by MINK1 and TNIK upon stimulation by RAP2A.

The protein resides in the postsynaptic density. Functionally, may be a scaffold component in the postsynaptic density. This chain is Protein TANC1 (Tanc1), found in Mus musculus (Mouse).